The sequence spans 233 residues: Protein DEHYDRATION-INDUCED 19 homolog 2 (233 aa).

The segment at D176 to R215 is disordered. Residues F191 to Q214 are compositionally biased toward basic and acidic residues.

It belongs to the Di19 family.

This chain is Protein DEHYDRATION-INDUCED 19 homolog 2 (DI19-2), found in Oryza sativa subsp. japonica (Rice).